A 250-amino-acid chain; its full sequence is Kallikrein-14 (250 aa).

The signal sequence occupies residues 1-18; sequence MFLLLIILQALAVAIAQS. The propeptide at 19-23 is activation peptide; it reads QGDHK. A Peptidase S1 domain is found at 24–248; sequence IIGGYRCVRN…YHSWIQRTMQ (225 aa). A disulfide bridge links Cys-51 with Cys-67. Residues His-66 and Asp-110 each act as charge relay system in the active site. Intrachain disulfides connect Cys-142–Cys-209, Cys-174–Cys-188, and Cys-199–Cys-224. The active-site Charge relay system is the Ser-203.

This sequence belongs to the peptidase S1 family. Kallikrein subfamily. Proteolytic cleavage of the activation peptide produces the active enzyme.

It localises to the secreted. It is found in the extracellular space. Inhibited by SERPINA1, SERPINC1, SERPINE1, SERPINF2, aprotinin, soybean, trypsin inhibitor and leupeptin. Inhibited by serine protease inhibitor SPINK5. Has an autoproteolytic activity which may have a regulatory effect. Activated by citrate and inhibited by zinc and to a lower extent by manganese. In terms of biological role, serine-type endopeptidase with a dual trypsin-like and chymotrypsin-like substrate specificity. May activate/inactivate the proteinase-activated receptors F2R, F2RL1 and F2RL3 and other kallikreins including KLK1, KLK3, KLK5 and KLK11. May function in seminal clot liquefaction through direct cleavage of the semenogelin SEMG1 and SEMG2 and activation of KLK3. May function through desmoglein DSG1 cleavage in epidermal desquamation a process by which the most superficial corneocytes are shed from the skin surface. May be involved in several aspects of tumor progression including growth, invasion and angiogenesis. The protein is Kallikrein-14 (Klk14) of Mus musculus (Mouse).